Consider the following 179-residue polypeptide: MAKLHDYYKDEVVKKLMTEFNYNSVMQVPRVEKITLNMGVGEAIADKKLLDNAAADLAAFSRQKPLSTKARKFVACFKIRQGYPIGCKVTLRGERMWEFFERLITIAVPRIRDFRGLSAKSFDGRGNYSMGVREQIIFPEIDYDKVDRVRGLDITITTTAKSDEEGRALLAAFDFPFRK.

An N6-acetyllysine modification is found at K3.

This sequence belongs to the universal ribosomal protein uL5 family. Part of the 50S ribosomal subunit; part of the 5S rRNA/L5/L18/L25 subcomplex. Contacts the 5S rRNA and the P site tRNA. Forms a bridge to the 30S subunit in the 70S ribosome.

This is one of the proteins that bind and probably mediate the attachment of the 5S RNA into the large ribosomal subunit, where it forms part of the central protuberance. In the 70S ribosome it contacts protein S13 of the 30S subunit (bridge B1b), connecting the 2 subunits; this bridge is implicated in subunit movement. Contacts the P site tRNA; the 5S rRNA and some of its associated proteins might help stabilize positioning of ribosome-bound tRNAs. The polypeptide is Large ribosomal subunit protein uL5 (Shigella flexneri).